Here is a 207-residue protein sequence, read N- to C-terminus: Adenylyl-sulfate kinase (207 aa).

ATP is bound at residue 39–46 (GLSGAGKS). S113 serves as the catalytic Phosphoserine intermediate.

The protein belongs to the APS kinase family.

It carries out the reaction adenosine 5'-phosphosulfate + ATP = 3'-phosphoadenylyl sulfate + ADP + H(+). Its pathway is sulfur metabolism; hydrogen sulfide biosynthesis; sulfite from sulfate: step 2/3. Catalyzes the synthesis of activated sulfate. The sequence is that of Adenylyl-sulfate kinase from Vibrio vulnificus (strain CMCP6).